Here is an 875-residue protein sequence, read N- to C-terminus: Probable ubiquitin carboxyl-terminal hydrolase 7 (875 aa).

The segment at 54–167 (KECSHLKKGV…RDVQQFICSN (114 aa)) adopts a UBP-type zinc-finger fold. Zn(2+) contacts are provided by cysteine 56, histidine 58, cysteine 83, cysteine 86, cysteine 101, cysteine 104, cysteine 109, histidine 116, histidine 120, histidine 127, cysteine 140, and cysteine 143. Positions 208–875 (PGLKNLGATC…EAYMLFYERV (668 aa)) constitute a USP domain. Cysteine 217 (nucleophile) is an active-site residue. Phosphoserine occurs at positions 333 and 337. Positions 396–486 (YSKELSQSSD…ASPKKEVLKS (91 aa)) are disordered. The segment covering 401–438 (SQSSDSSQHQHDSFLPANSSPLAASSTKSLPSSELLDS) has biased composition (low complexity). Over residues 473–484 (NHEEASPKKEVL) the composition is skewed to basic and acidic residues. Residues serine 486 and serine 493 each carry the phosphoserine modification. Basic residues predominate over residues 575 to 586 (RSRFSRSPKKSS). Positions 575 to 628 (RSRFSRSPKKSSVKIVVDNANDDTDQAPTTNSSSLNENLLGGHASENDKSLKQS) are disordered. A compositionally biased stretch (polar residues) spans 600–611 (QAPTTNSSSLNE). A Phosphoserine modification is found at serine 645. The active-site Proton acceptor is the histidine 812.

This sequence belongs to the peptidase C19 family.

It catalyses the reaction Thiol-dependent hydrolysis of ester, thioester, amide, peptide and isopeptide bonds formed by the C-terminal Gly of ubiquitin (a 76-residue protein attached to proteins as an intracellular targeting signal).. This chain is Probable ubiquitin carboxyl-terminal hydrolase 7 (ubp7), found in Schizosaccharomyces pombe (strain 972 / ATCC 24843) (Fission yeast).